The sequence spans 408 residues: Na(+)/H(+) antiporter NhaA (408 aa).

12 helical membrane passes run 42-62 (LMFVAALALLLANSPFAPVYF), 69-89 (VLGLTVLHWINDALMAVFFLL), 110-130 (ALPGIAALGGMVVPAVIFIAV), 140-160 (GWAIPSATDIAFALGVLSLLG), 169-189 (IFLTALAILDDLGAVLIIALF), 192-212 (AELTPLMLILAAATLLGLAAL), 215-235 (FGVKPLAPYLVLGVVLWFFVL), 238-258 (GIHATLAGVALALAIPLQAST), 277-297 (VAFLIVPVFGFANAGVSFAGL), 312-332 (LGLFFGKQVGVFGFAWLAIWL), 346-366 (LYGVAVLCGIGFTMSLFIGLL), and 380-400 (IGVLLGSTLAGLIGWLILRVT).

The protein belongs to the NhaA Na(+)/H(+) (TC 2.A.33) antiporter family.

It is found in the cell inner membrane. It carries out the reaction Na(+)(in) + 2 H(+)(out) = Na(+)(out) + 2 H(+)(in). In terms of biological role, na(+)/H(+) antiporter that extrudes sodium in exchange for external protons. The protein is Na(+)/H(+) antiporter NhaA of Nitrobacter hamburgensis (strain DSM 10229 / NCIMB 13809 / X14).